The sequence spans 367 residues: Coiled-coil domain-containing protein 34 (367 aa).

S55 carries the phosphoserine modification. Disordered regions lie at residues 77–105 (FPFGADDSEGEDEEALDEDARESESKVES), 191–228 (QKKNKQERKEREQKINKEMEEKEAKKREKEHLQEKAKE), and 310–349 (YNPIPWKPIHMPPPKEAKSGPGKKSKRHAASQPLPSSSLA). The segment covering 82-97 (DDSEGEDEEALDEDAR) has biased composition (acidic residues). Coiled coils occupy residues 87–108 (EDEEALDEDARESESKVESLEG) and 153–280 (RLQQ…AKNK). Over residues 197–228 (ERKEREQKINKEMEEKEAKKREKEHLQEKAKE) the composition is skewed to basic and acidic residues. The segment covering 339-349 (ASQPLPSSSLA) has biased composition (low complexity).

Expressed in testis and sperm.

Its subcellular location is the cell projection. The protein localises to the cilium. It is found in the flagellum. Functionally, involved in spermatogenesis. Has a probable role in anterograde intraflagellar transport which is essential for the formation of sperm flagella. The sequence is that of Coiled-coil domain-containing protein 34 (Ccdc34) from Mus musculus (Mouse).